The following is a 598-amino-acid chain: Elongation factor 4 (598 aa).

Positions 2-184 constitute a tr-type G domain; that stretch reads KNIRNFSIIA…EIVAKIPAPE (183 aa). GTP contacts are provided by residues 14–19 and 131–134; these read DHGKST and NKID.

It belongs to the TRAFAC class translation factor GTPase superfamily. Classic translation factor GTPase family. LepA subfamily.

The protein localises to the cell inner membrane. The catalysed reaction is GTP + H2O = GDP + phosphate + H(+). Its function is as follows. Required for accurate and efficient protein synthesis under certain stress conditions. May act as a fidelity factor of the translation reaction, by catalyzing a one-codon backward translocation of tRNAs on improperly translocated ribosomes. Back-translocation proceeds from a post-translocation (POST) complex to a pre-translocation (PRE) complex, thus giving elongation factor G a second chance to translocate the tRNAs correctly. Binds to ribosomes in a GTP-dependent manner. The chain is Elongation factor 4 from Haemophilus influenzae (strain 86-028NP).